Reading from the N-terminus, the 337-residue chain is Anthranilate phosphoribosyltransferase (337 aa).

Residues glycine 81, 84–85 (GD), serine 89, 91–94 (NVST), 109–117 (KHGNRALSS), and alanine 121 each bind 5-phospho-alpha-D-ribose 1-diphosphate. Glycine 81 lines the anthranilate pocket. Serine 93 is a Mg(2+) binding site. Position 112 (asparagine 112) interacts with anthranilate. Arginine 167 contacts anthranilate. Residues aspartate 226 and glutamate 227 each contribute to the Mg(2+) site.

The protein belongs to the anthranilate phosphoribosyltransferase family. In terms of assembly, homodimer. Requires Mg(2+) as cofactor.

The enzyme catalyses N-(5-phospho-beta-D-ribosyl)anthranilate + diphosphate = 5-phospho-alpha-D-ribose 1-diphosphate + anthranilate. Its pathway is amino-acid biosynthesis; L-tryptophan biosynthesis; L-tryptophan from chorismate: step 2/5. Catalyzes the transfer of the phosphoribosyl group of 5-phosphorylribose-1-pyrophosphate (PRPP) to anthranilate to yield N-(5'-phosphoribosyl)-anthranilate (PRA). This is Anthranilate phosphoribosyltransferase from Nitrobacter hamburgensis (strain DSM 10229 / NCIMB 13809 / X14).